The chain runs to 406 residues: NIPA-like protein 3 (406 aa).

4 helical membrane passes run 33–53, 76–96, 101–121, and 135–155; these read NLIGALLAIFGHLVVSIALNL, WWLGLFLMLLGELGVFASYAF, LIVPLSAVSVIASAIIGIIFI, and VLSFVGCGLAVVGTYLLVTFA. Residue Asn-166 is glycosylated (N-linked (GlcNAc...) asparagine). 5 consecutive transmembrane segments (helical) span residues 171-191, 202-222, 240-260, 271-291, and 300-320; these read LVSWPFLLYMLVEIILFCLLL, IVVILLLVALLGSMTVVTVKA, PIFYVMFVCMVATAVYQAAFL, LIASVGYILSTTIAITAGAIF, and VLHICMFALGCLIAFLGVFLI. Ser-372 bears the Phosphoserine mark.

The protein belongs to the NIPA family.

It localises to the membrane. The chain is NIPA-like protein 3 (NIPAL3) from Homo sapiens (Human).